The following is a 147-amino-acid chain: Large ribosomal subunit protein uL15 (147 aa).

Residues methionine 1–alanine 58 are disordered. Composition is skewed to gly residues over residues arginine 21–serine 31 and alanine 42–glycine 52.

Belongs to the universal ribosomal protein uL15 family. Part of the 50S ribosomal subunit.

Functionally, binds to the 23S rRNA. The polypeptide is Large ribosomal subunit protein uL15 (Desulfitobacterium hafniense (strain Y51)).